Reading from the N-terminus, the 641-residue chain is Threonine--tRNA ligase (641 aa).

One can recognise a TGS domain in the interval 1–61 (MPVITLPDGS…ENDTELAIVT (61 aa)). The interval 242–533 (DHRKIGKKLG…LIEEYEGAFP (292 aa)) is catalytic. C333, H384, and H510 together coordinate Zn(2+).

The protein belongs to the class-II aminoacyl-tRNA synthetase family. As to quaternary structure, homodimer. The cofactor is Zn(2+).

The protein localises to the cytoplasm. It carries out the reaction tRNA(Thr) + L-threonine + ATP = L-threonyl-tRNA(Thr) + AMP + diphosphate + H(+). In terms of biological role, catalyzes the attachment of threonine to tRNA(Thr) in a two-step reaction: L-threonine is first activated by ATP to form Thr-AMP and then transferred to the acceptor end of tRNA(Thr). Also edits incorrectly charged L-seryl-tRNA(Thr). The polypeptide is Threonine--tRNA ligase (Marinobacter nauticus (strain ATCC 700491 / DSM 11845 / VT8) (Marinobacter aquaeolei)).